The following is a 338-amino-acid chain: Delta(9)-fatty-acid desaturase fat-7 (338 aa).

A run of 4 helical transmembrane segments spans residues 51–71, 76–96, 194–214, and 218–238; these read VALF…LVFH, TAVF…AGAH, YFPL…VYFW, and AFIA…HATW.

It belongs to the fatty acid desaturase type 1 family. As to expression, expressed in the intestine in adult worms and in all four larval stages.

It localises to the membrane. The catalysed reaction is octadecanoyl-CoA + 2 Fe(II)-[cytochrome b5] + O2 + 2 H(+) = (9Z)-octadecenoyl-CoA + 2 Fe(III)-[cytochrome b5] + 2 H2O. It catalyses the reaction hexadecanoyl-CoA + 2 Fe(II)-[cytochrome b5] + O2 + 2 H(+) = (9Z)-hexadecenoyl-CoA + 2 Fe(III)-[cytochrome b5] + 2 H2O. It carries out the reaction heptadecanoyl-CoA + 2 Fe(II)-[cytochrome b5] + O2 + 2 H(+) = (9Z)-heptadecenoyl-CoA + 2 Fe(III)-[cytochrome b5] + 2 H2O. The enzyme catalyses (11E)-octadecenoyl-CoA + 2 Fe(II)-[cytochrome b5] + O2 + 2 H(+) = (9Z,11E)-octadecadienoyl-CoA + 2 Fe(III)-[cytochrome b5] + 2 H2O. It participates in lipid metabolism; monounsaturated fatty acid biosynthesis. It functions in the pathway lipid metabolism; fatty acid metabolism. In terms of biological role, delta(9)-fatty acid desaturase that acts preferentially on stearoyl-CoA (octadecanoyl-CoA) producing the monounsaturated oleoyl-CoA ((9Z)-octadecenoyl-CoA), one of the most abundant monounsaturated fatty acid in Caenorhabditis elegans phospholipids and triacylglycerols. Also acts on palmitoyl-CoA (hexadecanoyl-CoA), heptadecanoyl-CoA and (11E)-octadecenoyl-CoA (trans-vaccenoyl-CoA), the monounsaturated fatty acids (MUFAs) produced are further used by several other desaturases and elongases as substrates to synthesize polyunsaturated fatty acids (PUFAs) endogenously (PUFAs are essential for membrane structure and many cellular and physiological processes). Unlike plants, Caenorhabditis elegans desaturases seem to use fatty acyl-CoAs as substrates. Partially inhibits expression of genes involved in beta-oxidation, such as ech-1 and acs-2, perhaps signaling via the actions of one of its fatty acid products. May form part of a negative feedback loop with the transcription factor nhr-49 to limit beta-oxidation, in which nhr-49 stimulates expression of fat-7 and acs-2, and in turn fat-7 indirectly inhibits acs-2 and other genes also involved in beta-oxidation. The sequence is that of Delta(9)-fatty-acid desaturase fat-7 (fat-7) from Caenorhabditis elegans.